Here is a 206-residue protein sequence, read N- to C-terminus: Ribosomal RNA large subunit methyltransferase E (206 aa).

5 residues coordinate S-adenosyl-L-methionine: G60, W62, D80, D96, and D121. K161 serves as the catalytic Proton acceptor.

The protein belongs to the class I-like SAM-binding methyltransferase superfamily. RNA methyltransferase RlmE family.

The protein resides in the cytoplasm. The catalysed reaction is uridine(2552) in 23S rRNA + S-adenosyl-L-methionine = 2'-O-methyluridine(2552) in 23S rRNA + S-adenosyl-L-homocysteine + H(+). Its function is as follows. Specifically methylates the uridine in position 2552 of 23S rRNA at the 2'-O position of the ribose in the fully assembled 50S ribosomal subunit. This chain is Ribosomal RNA large subunit methyltransferase E, found in Francisella tularensis subsp. holarctica (strain FTNF002-00 / FTA).